The sequence spans 117 residues: Appetite-regulating hormone (117 aa).

The first 23 residues, 1–23 (MPSPGTVCSLLLFSMLWADLAMA), serve as a signal peptide directing secretion. Ser26 carries the O-decanoyl serine; alternate lipid modification. Ser26 carries the O-hexanoyl serine; alternate lipid modification. Residue Ser26 is the site of O-octanoyl serine; alternate attachment. A disordered region spans residues 29–52 (SPEHQKVQQRKESKKPPAKLQPRA). A compositionally biased stretch (basic and acidic residues) spans 31–43 (EHQKVQQRKESKK). A propeptide spans 52–75 (ALEGLIHPEDTSQVEGAEDELEIR) (removed in mature form). Leu98 is modified (leucine amide). Residues 99–117 (GKFLQDVLWEEADEVLADE) constitute a propeptide, removed in mature form.

The protein belongs to the motilin family. Post-translationally, O-octanoylated by GOAT/MBOAT4. O-octanoylation or O-decanoylation is essential for ghrelin activity. The O-decanoylated forms Ghrelin-27-C10 and Ghrelin-28-C10 differ in the length of the carbon backbone of the carboxylic acid bound to Ser-26. A small fraction of ghrelin, ghrelin-27-C10:1, ghrelin-27-C10:2, ghrelin-28-C8:1, ghrelin-28-C10:1, and ghrelin-28-C10:2, may be modified with singly or doubly unsaturated carboxylic acids. In terms of processing, amidation of Leu-98 is essential for obestatin activity.

The protein localises to the secreted. Its function is as follows. Ghrelin is the ligand for growth hormone secretagogue receptor type 1 (GHSR). Induces the release of growth hormone from the pituitary. Has an appetite-stimulating effect, induces adiposity and stimulates gastric acid secretion. Involved in growth regulation. Functionally, obestatin may be the ligand for GPR39. May have an appetite-reducing effect resulting in decreased food intake. May reduce gastric emptying activity and jejunal motility. The protein is Appetite-regulating hormone (GHRL) of Felis catus (Cat).